We begin with the raw amino-acid sequence, 470 residues long: Nuclear receptor ROR-beta (470 aa).

Positions 18–93 form a DNA-binding region, nuclear receptor; it reads VIPCKICGDK…LGMSRDAVKF (76 aa). 2 NR C4-type zinc fingers span residues 21 to 41 and 57 to 81; these read CKIC…CEGC and CPRQ…LQKC. Basic and acidic residues predominate over residues 104–117; that stretch reads LYAEVQKHQQRLQE. Residues 104-127 are disordered; that stretch reads LYAEVQKHQQRLQEQRQQQSGEAE. An NR LBD domain is found at 222–460; that stretch reads EIDRIAQNII…TLFPPLYKEL (239 aa). Positions 456-461 match the AF-2 motif; the sequence is LYKELF.

Belongs to the nuclear hormone receptor family. NR1 subfamily. As to quaternary structure, monomer. Interacts with CRX. Isoform 2 expressed with circadian rhythm in eye and pineal gland. Isoform 1 expressed in retina cortex, thalamus, and hypothalamus.

Its subcellular location is the nucleus. The protein localises to the nucleoplasm. Functionally, nuclear receptor that binds DNA as a monomer to ROR response elements (RORE) containing a single core motif half-site 5'-AGGTCA-3' preceded by a short A-T-rich sequence. Considered to have intrinsic transcriptional activity, have some natural ligands such as all-trans retinoic acid (ATRA) and other retinoids which act as inverse agonists repressing the transcriptional activity. Required for normal postnatal development of rod and cone photoreceptor cells. Modulates rod photoreceptors differentiation at least by inducing the transcription factor NRL-mediated pathway. In cone photoreceptor cells, regulates transcription of OPN1SW. Involved in the regulation of the period length and stability of the circadian rhythm. May control cytoarchitectural patterning of neocortical neurons during development. May act in a dose-dependent manner to regulate barrel formation upon innervation of layer IV neurons by thalamocortical axons. May play a role in the suppression of osteoblastic differentiation through the inhibition of RUNX2 transcriptional activity. Critical for hindlimb motor control and for the differentiation of amacrine and horizontal cells in the retina. Regulates the expression of PTF1A synergistically with FOXN4. This chain is Nuclear receptor ROR-beta (Rorb), found in Rattus norvegicus (Rat).